Here is a 410-residue protein sequence, read N- to C-terminus: Peptidase T (410 aa).

Histidine 79 contributes to the Zn(2+) binding site. Aspartate 81 is a catalytic residue. Aspartate 142 contributes to the Zn(2+) binding site. Residue glutamate 176 is the Proton acceptor of the active site. 3 residues coordinate Zn(2+): glutamate 177, aspartate 199, and histidine 381.

It belongs to the peptidase M20B family. It depends on Zn(2+) as a cofactor.

It is found in the cytoplasm. It catalyses the reaction Release of the N-terminal residue from a tripeptide.. Functionally, cleaves the N-terminal amino acid of tripeptides. The polypeptide is Peptidase T (Bacillus thuringiensis (strain Al Hakam)).